Consider the following 308-residue polypeptide: tRNA pseudouridine synthase B (308 aa).

Aspartate 49 (nucleophile) is an active-site residue.

This sequence belongs to the pseudouridine synthase TruB family. Type 1 subfamily.

The enzyme catalyses uridine(55) in tRNA = pseudouridine(55) in tRNA. Responsible for synthesis of pseudouridine from uracil-55 in the psi GC loop of transfer RNAs. The chain is tRNA pseudouridine synthase B from Corynebacterium jeikeium (strain K411).